The primary structure comprises 311 residues: Syndecan-1 (311 aa).

Positions 1-22 (MRRAALWLWLCALALRLQPALP) are cleaved as a signal peptide. Over 23–255 (QIVAVNVPPE…SLLDRKEVLG (233 aa)) the chain is Extracellular. Disordered stretches follow at residues 29-59 (VPPEDQDGSGDDSDNFSGSGTGALPDTLSRQ) and 152-184 (SHPHGGMQPGLHETSAPTAPGQPDHQPPRVEGG). Positions 32-42 (EDQDGSGDDSD) are enriched in acidic residues. O-linked (Xyl...) (chondroitin sulfate) serine glycosylation is present at serine 37. Asparagine 43 carries an N-linked (GlcNAc...) asparagine glycan. O-linked (Xyl...) (heparan sulfate) serine glycosylation is found at serine 45 and serine 47. Serine 207 and serine 217 each carry an O-linked (Xyl...) (chondroitin sulfate) serine glycan. Residues 256-276 (GVIAGGLVGLIFAVCLVAFML) form a helical membrane-spanning segment. Topologically, residues 277–311 (YRMKKKDEGSYSLEEPKQANGGAYQKPTKQEEFYA) are cytoplasmic. Residues 285 to 311 (GSYSLEEPKQANGGAYQKPTKQEEFYA) are disordered. Phosphoserine is present on serine 286.

It belongs to the syndecan proteoglycan family. In terms of assembly, interacts with CDCP1. Interacts (via C-terminus) with TIAM1 (via PDZ domain). Interacts with MDK. Shedding is enhanced by a number of factors such as heparanase, thrombin or EGF. Also by stress and wound healing. PMA-mediated shedding is inhibited by TIMP3.

The protein resides in the membrane. The protein localises to the secreted. Its subcellular location is the extracellular exosome. Its function is as follows. Cell surface proteoglycan that contains both heparan sulfate and chondroitin sulfate and that links the cytoskeleton to the interstitial matrix. Regulates exosome biogenesis in concert with SDCBP and PDCD6IP. Able to induce its own expression in dental mesenchymal cells and also in the neighboring dental epithelial cells via an MSX1-mediated pathway. The chain is Syndecan-1 from Mus musculus (Mouse).